The chain runs to 138 residues: Transcription antitermination protein NusB (138 aa).

Belongs to the NusB family.

Involved in transcription antitermination. Required for transcription of ribosomal RNA (rRNA) genes. Binds specifically to the boxA antiterminator sequence of the ribosomal RNA (rrn) operons. The protein is Transcription antitermination protein NusB of Helicobacter pylori (strain Shi470).